We begin with the raw amino-acid sequence, 194 residues long: Putative manganese efflux pump MntP (194 aa).

6 helical membrane-spanning segments follow: residues 3 to 23, 37 to 57, 69 to 89, 110 to 132, 147 to 167, and 172 to 192; these read PFSI…AAIG, LRAG…GWVL, DHWI…IAGL, LGLA…SLAF, CTFS…NLIG, and ILGG…HLGA.

The protein belongs to the MntP (TC 9.B.29) family.

Its subcellular location is the cell inner membrane. Probably functions as a manganese efflux pump. In Xanthomonas oryzae pv. oryzae (strain MAFF 311018), this protein is Putative manganese efflux pump MntP.